A 279-amino-acid polypeptide reads, in one-letter code: NADPH-dependent 7-cyano-7-deazaguanine reductase (279 aa).

86 to 88 is a substrate binding site; that stretch reads IES. 88 to 89 provides a ligand contact to NADPH; that stretch reads SK. The Thioimide intermediate role is filled by cysteine 187. Aspartate 194 (proton donor) is an active-site residue. Substrate is bound at residue 226–227; that stretch reads HE. 255 to 256 contacts NADPH; sequence RG.

Belongs to the GTP cyclohydrolase I family. QueF type 2 subfamily. Homodimer.

The protein localises to the cytoplasm. It catalyses the reaction 7-aminomethyl-7-carbaguanine + 2 NADP(+) = 7-cyano-7-deazaguanine + 2 NADPH + 3 H(+). It functions in the pathway tRNA modification; tRNA-queuosine biosynthesis. Catalyzes the NADPH-dependent reduction of 7-cyano-7-deazaguanine (preQ0) to 7-aminomethyl-7-deazaguanine (preQ1). In Pasteurella multocida (strain Pm70), this protein is NADPH-dependent 7-cyano-7-deazaguanine reductase.